A 323-amino-acid polypeptide reads, in one-letter code: Non-structural protein 9 (323 aa).

The interval 1-142 (MFTSSAAKTG…GGSRPSQERG (142 aa)) is disordered. Residues 33-49 (IDGSISSGPISTGPDSD) show a composition bias toward low complexity. The span at 99 to 115 (PNHTDIGTSLGQVTTKG) shows a compositional bias: polar residues.

It localises to the host cytoplasm. Constituent of viral factories. The protein is Non-structural protein 9 of Rice gall dwarf virus (RGDV).